Reading from the N-terminus, the 566-residue chain is Pyrophosphate--fructose 6-phosphate 1-phosphotransferase subunit beta 1 (566 aa).

Ser-16 carries the phosphoserine modification. Position 105 (Gly-105) interacts with diphosphate. Asp-199 serves as a coordination point for Mg(2+). Substrate is bound by residues 227 to 229 (TID), 266 to 267 (KY), 274 to 276 (MGR), Glu-335, and 440 to 443 (YEGR). Catalysis depends on Asp-229, which acts as the Proton acceptor.

It belongs to the phosphofructokinase type A (PFKA) family. PPi-dependent PFK group II subfamily. Clade 'Long' sub-subfamily. As to quaternary structure, tetramer of two alpha (regulatory) and two beta (catalytic) chains. Requires Mg(2+) as cofactor.

It is found in the cytoplasm. It catalyses the reaction beta-D-fructose 6-phosphate + diphosphate = beta-D-fructose 1,6-bisphosphate + phosphate + H(+). Its pathway is carbohydrate degradation; glycolysis; D-glyceraldehyde 3-phosphate and glycerone phosphate from D-glucose: step 3/4. With respect to regulation, allosterically activated by fructose 2,6-bisphosphate. Functionally, catalytic subunit of pyrophosphate--fructose 6-phosphate 1-phosphotransferase. Catalyzes the phosphorylation of D-fructose 6-phosphate, the first committing step of glycolysis. Uses inorganic phosphate (PPi) as phosphoryl donor instead of ATP like common ATP-dependent phosphofructokinases (ATP-PFKs), which renders the reaction reversible, and can thus function both in glycolysis and gluconeogenesis. The polypeptide is Pyrophosphate--fructose 6-phosphate 1-phosphotransferase subunit beta 1 (Arabidopsis thaliana (Mouse-ear cress)).